We begin with the raw amino-acid sequence, 129 residues long: Insulin-like growth factor 2 (129 aa).

Positions 1-24 (MGVPMGKSLLAPLTFLALASCCFA) are cleaved as a signal peptide. Positions 25–52 (AYRPSETLCGGELVDTLQFVCGDRGFYF) are b. 3 disulfide bridges follow: Cys-33–Cys-72, Cys-45–Cys-85, and Cys-71–Cys-76. Positions 53–65 (SRPASRVSRRSSR) are c. The tract at residues 66–86 (GIVEECCFRSCDLALLETYCA) is a. Residues 87-92 (TPAKSE) are d. The propeptide at 93–129 (RDVSTPPTVLPDNFPRYPVGKFFQYDTWKQSAQRLRR) is e peptide.

Belongs to the insulin family. In terms of assembly, interacts with MYORG; this interaction is required for IGF2 secretion. Interacts with integrins ITGAV:ITGB3 and ITGA6:ITGB4; integrin-binding is required for IGF2 signaling. In terms of processing, proteolytically processed by PCSK4, proIGF2 is cleaved at Arg-129 and Arg-92 to generate big-IGF2 and mature IGF2.

It localises to the secreted. Its function is as follows. The insulin-like growth factors possess growth-promoting activity. Major fetal growth hormone in mammals. Plays a key role in regulating fetoplacental development. IGF2 is influenced by placental lactogen. Also involved in tissue differentiation. In adults, involved in glucose metabolism in adipose tissue, skeletal muscle and liver. Acts as a ligand for integrin which is required for IGF2 signaling. Positively regulates myogenic transcription factor MYOD1 function by facilitating the recruitment of transcriptional coactivators, thereby controlling muscle terminal differentiation. Inhibits myoblast differentiation and modulates metabolism via increasing the mitochondrial respiration rate. Functionally, preptin undergoes glucose-mediated co-secretion with insulin, and acts as a physiological amplifier of glucose-mediated insulin secretion. Exhibits osteogenic properties by increasing osteoblast mitogenic activity through phosphoactivation of MAPK1 and MAPK3. This chain is Insulin-like growth factor 2, found in Neovison vison (American mink).